A 351-amino-acid polypeptide reads, in one-letter code: Leukotriene B4 receptor 1 (351 aa).

Residues M1–L21 are Extracellular-facing. An N-linked (GlcNAc...) asparagine glycan is attached at N4. Residues L22–S44 form a helical membrane-spanning segment. Topologically, residues I45–A56 are cytoplasmic. A helical membrane pass occupies residues L57–L77. Topologically, residues H78–R93 are extracellular. The chain crosses the membrane as a helical span at residues L94–L115. Residues D116 to L140 lie on the Cytoplasmic side of the membrane. Residues A141–T161 traverse the membrane as a helical segment. The Extracellular portion of the chain corresponds to P162–K179. N164 carries an N-linked (GlcNAc...) asparagine glycan. The helical transmembrane segment at V180–A200 threads the bilayer. Residues S201–R222 are Cytoplasmic-facing. A helical transmembrane segment spans residues L223 to L243. Over V244 to Y268 the chain is Extracellular. A helical membrane pass occupies residues V269 to G289. Topologically, residues G290–K351 are cytoplasmic. Polar residues-rich tracts occupy residues E311 to A327 and S339 to K351. The disordered stretch occupies residues E311 to K351.

It belongs to the G-protein coupled receptor 1 family. Phosphorylated by GRK6 upon leukotriene B4 binding; which promotes desensitization. Exclusively expressed in polymorphonuclear leukocytes.

Its subcellular location is the cell membrane. In terms of biological role, receptor for leukotriene B4, a potent chemoattractant involved in inflammation and immune response. This chain is Leukotriene B4 receptor 1 (Ltb4r), found in Rattus norvegicus (Rat).